Reading from the N-terminus, the 460-residue chain is Methionine aminopeptidase 2-1 (460 aa).

Positions 1-90 are disordered; that stretch reads MGSKSPNGED…SAQAAQQTAP (90 aa). The segment covering 30-39 has biased composition (low complexity); it reads SAAASGLLRG. The span at 42-52 shows a compositional bias: acidic residues; the sequence is EDQDEDGDDDE. Positions 69-81 are enriched in basic residues; it reads TKKRRRNNKKKKS. His212 lines the substrate pocket. Asp233, Asp244, and His313 together coordinate a divalent metal cation. His321 serves as a coordination point for substrate. Residues Glu346 and Glu441 each contribute to the a divalent metal cation site.

The protein belongs to the peptidase M24A family. Methionine aminopeptidase eukaryotic type 2 subfamily. Requires Co(2+) as cofactor. Zn(2+) is required as a cofactor. The cofactor is Mn(2+). Fe(2+) serves as cofactor.

It localises to the cytoplasm. The catalysed reaction is Release of N-terminal amino acids, preferentially methionine, from peptides and arylamides.. In terms of biological role, cotranslationally removes the N-terminal methionine from nascent proteins. The N-terminal methionine is often cleaved when the second residue in the primary sequence is small and uncharged (Met-Ala-, Cys, Gly, Pro, Ser, Thr, or Val). The sequence is that of Methionine aminopeptidase 2-1 from Leptosphaeria maculans (strain JN3 / isolate v23.1.3 / race Av1-4-5-6-7-8) (Blackleg fungus).